A 2778-amino-acid chain; its full sequence is Probable ubiquitin carboxyl-terminal hydrolase FAF (2778 aa).

The segment at 1–85 is disordered; it reads MTFDTRRHTT…SQSSDDVAAS (85 aa). Residues 10 to 39 show a composition bias toward low complexity; that stretch reads TGQPGSTAPSSSSSTTSTTTTTTSPAQSAG. Residues 71–85 are compositionally biased toward polar residues; it reads QPATDSQSSDDVAAS. Phosphoserine is present on Ser-924. A disordered region spans residues 1065–1094; the sequence is GTGLASSPDSSSDSSTGSPPRPCPDMQRVE. A compositionally biased stretch (low complexity) spans 1070–1082; the sequence is SSPDSSSDSSTGS. A USP domain is found at 1668 to 2062; it reads CGLKNAGATC…NAYMLFYTRC (395 aa). Catalysis depends on Cys-1677, which acts as the Nucleophile. His-1986 acts as the Proton acceptor in catalysis. Disordered stretches follow at residues 2568–2632 and 2644–2691; these read VSEK…GDSN and AYTS…INGL. 2 stretches are compositionally biased toward low complexity: residues 2614–2627 and 2644–2671; these read TPTTSSPSTAAWPA and AYTSTGSGSTSGGSAPTSALTTTAGSGA. A compositionally biased stretch (polar residues) spans 2672–2691; sequence NSETESSAQETTGETTINGL.

The protein belongs to the peptidase C19 family. Interacts with imd. Post-translationally, ubiquitinated. Ubiquitination is enhanced by the expression of imd. Eye disks and ovaries. Expressed in larval fat body.

The catalysed reaction is Thiol-dependent hydrolysis of ester, thioester, amide, peptide and isopeptide bonds formed by the C-terminal Gly of ubiquitin (a 76-residue protein attached to proteins as an intracellular targeting signal).. Its function is as follows. Ubiquitin C-terminal hydrolase involved in development and the imd/NF-kappa-B (IMD) signaling cascade. Required for eye and embryo development, and plays a role in compound eye assembly and oogenesis respectively. In the larval eye disks, cells outside the assembling facets require this protein for short-range cell interactions that prevent the mystery cells from becoming photoreceptors. Also required for nuclear migration and cellularization in early embryogenesis and could play a role in pole cell determination, development or function. Regulates the IMD signaling cascade at later stages of infection (around 6 hours post-infection) by inhibiting the expression of the antimicrobial peptides Dpt and Dro. Acts by modulating the state of imd polyubiquitination and/or stability; a function which appears to be independent of its enzymatic activity. In turn, imd enhances the polyubiquitination and stability of faf suggesting that they may form a regulatory feedback mechanism within the Imd pathway. This Drosophila melanogaster (Fruit fly) protein is Probable ubiquitin carboxyl-terminal hydrolase FAF (faf).